Here is a 1653-residue protein sequence, read N- to C-terminus: Protein strawberry notch (1653 aa).

Disordered stretches follow at residues 1–46, 190–211, 237–265, 317–345, and 883–1043; these read MTSK…GRDL, GSPA…GGAI, GSNA…PNPG, NNQK…VKGN, and SVAD…PSGS. Positions 11–36 are enriched in acidic residues; that stretch reads DADDDNDNFDEDDSGSDFDDDEDPDQ. Serine 24 and serine 26 each carry phosphoserine. Residues 194-205 show a composition bias toward polar residues; sequence ARSSGNAGTTGS. Residues 256 to 265 show a composition bias toward low complexity; that stretch reads SPTGGIPNPG. The segment covering 329–342 has biased composition (gly residues); that stretch reads GSGGPAGGAPGSGV. Over residues 883 to 901 the composition is skewed to low complexity; that stretch reads SVADSTSSLSNNSNITTAA. Residues serine 929 and serine 931 each carry the phosphoserine modification. A compositionally biased stretch (acidic residues) spans 966-975; sequence IDDEDEDHDV. Residues 980–998 show a composition bias toward polar residues; that stretch reads RSVASDASSDFNPFFSGSD. The span at 1008–1027 shows a compositional bias: basic residues; sequence RSKKSKKAQKKSKKKVKKEK. Residues 1064–1125 adopt a coiled-coil conformation; that stretch reads LSTQDKIQDL…RKIERLGARL (62 aa).

This sequence belongs to the SBNO family. As to quaternary structure, interacts with vg for function in the wing disk. Interacts with Su(H) for function in the eye disk. In terms of tissue distribution, at stage 8, when the formation of the midline precursor cells depends on Notch signaling, high level of expression is seen in the midline precursor cells and a lower level in the surrounding epidermal cells. Between stages 11 and 14, expression is uniform throughout the epidermis, and at stage 16, high level of expression is restricted to the central nervous system. Expressed in the larval leg, wing and eye imaginal disks. Expression is over the wing disk and accumulates within the pleural region.

Its subcellular location is the nucleus. Notch pathway component, may contribute to the specificity between lateral and inductive Notch signaling pathways in the wing disk. Required during many developmental stages including oogenesis, embryogenesis and imaginal development of the eye, wing and leg. Ebi and sno regulate EGFR-dependent Delta transcription in the developing eye, by antagonizing a repressor function of Suppressor of Hairless (Su(H)). They are required in the R-cells for normal cone cell development. The polypeptide is Protein strawberry notch (Drosophila melanogaster (Fruit fly)).